The primary structure comprises 540 residues: Ribonuclease Y (540 aa).

The chain crosses the membrane as a helical span at residues 4-24 (TILVPVAVAIVSVLVGGCAGY). The 64-residue stretch at 230-293 (TVSVVNLPSD…EIAKRALERL (64 aa)) folds into the KH domain. In terms of domain architecture, HD spans 356–449 (VLSHSIEVGK…VVAADTISSA (94 aa)).

It belongs to the RNase Y family.

It is found in the cell membrane. In terms of biological role, endoribonuclease that initiates mRNA decay. The sequence is that of Ribonuclease Y from Lactobacillus johnsonii (strain CNCM I-12250 / La1 / NCC 533).